Here is a 557-residue protein sequence, read N- to C-terminus: TWiK family of potassium channels protein 7 (557 aa).

Disordered regions lie at residues 1-34 and 128-151; these read MTSSSRGYQRVDSSGDGGSLLMEEEGDNPHEALL and DKSGHEDIDDESDDESKDEDEEEE. The Cytoplasmic segment spans residues 1-165; the sequence is MTSSSRGYQR…RKFAKLVLPH (165 aa). Residues 134–151 are compositionally biased toward acidic residues; that stretch reads DIDDESDDESKDEDEEEE. A helical transmembrane segment spans residues 166 to 186; it reads VALVLLTCTYTVIGALIFYSV. 2 N-linked (GlcNAc...) asparagine glycosylation sites follow: Asn220 and Asn237. Residues 270–290 constitute an intramembrane region (pore-forming); it reads SIFFAVTVVTTIGYGNPVPVT. The helical transmembrane segment at 295-315 threads the bilayer; the sequence is IWCILFSLLGIPLTLVTIADL. Residues 316-368 are Cytoplasmic-facing; sequence GKFLSEHLVWLYGNYLKLKYLILSRHRKERREHVCEHCHSHGMGHDMNIEEKR. A helical transmembrane segment spans residues 369-389; that stretch reads IPAFLVLAILIVYTAFGGVLM. An intramembrane region (pore-forming) is located at residues 397-417; the sequence is FFTSFYWSFITMTTVGFGDLM. The helical transmembrane segment at 426–446 threads the bilayer; the sequence is IILLYIILGLAITTMCIDLVG. The Cytoplasmic segment spans residues 447–557; it reads VQYIRKIHYF…SRYSLNRAFK (111 aa).

The protein belongs to the two pore domain potassium channel (TC 1.A.1.8) family.

It localises to the membrane. In Caenorhabditis elegans, this protein is TWiK family of potassium channels protein 7 (twk-7).